The chain runs to 320 residues: Malate dehydrogenase (320 aa).

Residues 10-15 (GSGMIG) and Asp-34 each bind NAD(+). The substrate site is built by Arg-83 and Arg-89. NAD(+)-binding positions include Asn-96 and 119–121 (ITN). Asn-121 and Arg-152 together coordinate substrate. The active-site Proton acceptor is His-176.

Belongs to the LDH/MDH superfamily. MDH type 3 family.

The catalysed reaction is (S)-malate + NAD(+) = oxaloacetate + NADH + H(+). Functionally, catalyzes the reversible oxidation of malate to oxaloacetate. This Allorhizobium ampelinum (strain ATCC BAA-846 / DSM 112012 / S4) (Agrobacterium vitis (strain S4)) protein is Malate dehydrogenase.